The sequence spans 561 residues: Asparagine synthetase [glutamine-hydrolyzing] (561 aa).

The active-site For GATase activity is Cys-2. Positions 2–191 (CGIWALFGSD…PGHYEVLDLK (190 aa)) constitute a Glutamine amidotransferase type-2 domain. Residues 49-53 (RLAVV), 75-77 (NGE), and Asp-97 contribute to the L-glutamine site. One can recognise an Asparagine synthetase domain in the interval 213 to 536 (HALYDNVEKL…PGRADWLSHY (324 aa)). Residues Leu-256, Ile-288, and 363–364 (SG) each bind ATP. An N6-acetyllysine modification is found at Lys-385. Thr-545 bears the Phosphothreonine mark. Residue Ser-557 is modified to Phosphoserine.

It catalyses the reaction L-aspartate + L-glutamine + ATP + H2O = L-asparagine + L-glutamate + AMP + diphosphate + H(+). Its pathway is amino-acid biosynthesis; L-asparagine biosynthesis; L-asparagine from L-aspartate (L-Gln route): step 1/1. The sequence is that of Asparagine synthetase [glutamine-hydrolyzing] (ASNS) from Pongo abelii (Sumatran orangutan).